We begin with the raw amino-acid sequence, 550 residues long: Hydroxylamine reductase (550 aa).

Positions 3, 6, 18, and 25 each coordinate [2Fe-2S] cluster. Residues H249, E273, C317, C405, C433, C458, E492, and K494 each coordinate hybrid [4Fe-2O-2S] cluster. C405 is modified (cysteine persulfide).

The protein belongs to the HCP family. It depends on [2Fe-2S] cluster as a cofactor. Hybrid [4Fe-2O-2S] cluster is required as a cofactor.

It is found in the cytoplasm. The catalysed reaction is A + NH4(+) + H2O = hydroxylamine + AH2 + H(+). Functionally, catalyzes the reduction of hydroxylamine to form NH(3) and H(2)O. This is Hydroxylamine reductase from Escherichia coli O139:H28 (strain E24377A / ETEC).